A 65-amino-acid polypeptide reads, in one-letter code: Toxin NaTx-22 (65 aa).

One can recognise an LCN-type CS-alpha/beta domain in the interval 1–64 (KDGYPVIKTT…TYPIPGKTCK (64 aa)). 4 cysteine pairs are disulfide-bonded: C12–C63, C16–C39, C25–C44, and C29–C46.

Belongs to the long (4 C-C) scorpion toxin superfamily. Sodium channel inhibitor family. Expressed by the venom gland.

It localises to the secreted. Its function is as follows. Probable sodium channel inhibitor. The polypeptide is Toxin NaTx-22 (Centruroides sculpturatus (Arizona bark scorpion)).